We begin with the raw amino-acid sequence, 348 residues long: Dihydroorotase (348 aa).

Residues His17 and His19 each coordinate Zn(2+). Substrate is bound by residues 19 to 21 and Asn45; that span reads HLR. Zn(2+) contacts are provided by Lys103, His140, and His178. Residue Lys103 is modified to N6-carboxylysine. His140 lines the substrate pocket. Leu223 is a binding site for substrate. Asp251 lines the Zn(2+) pocket. Asp251 is a catalytic residue. Substrate contacts are provided by His255 and Ala267.

It belongs to the metallo-dependent hydrolases superfamily. DHOase family. Class II DHOase subfamily. In terms of assembly, homodimer. The cofactor is Zn(2+).

The enzyme catalyses (S)-dihydroorotate + H2O = N-carbamoyl-L-aspartate + H(+). Its pathway is pyrimidine metabolism; UMP biosynthesis via de novo pathway; (S)-dihydroorotate from bicarbonate: step 3/3. In terms of biological role, catalyzes the reversible cyclization of carbamoyl aspartate to dihydroorotate. This Salmonella paratyphi C (strain RKS4594) protein is Dihydroorotase.